Reading from the N-terminus, the 79-residue chain is Translational regulator CsrA (79 aa).

Belongs to the CsrA/RsmA family. As to quaternary structure, homodimer; the beta-strands of each monomer intercalate to form a hydrophobic core, while the alpha-helices form wings that extend away from the core.

The protein resides in the cytoplasm. Its function is as follows. A translational regulator that binds mRNA to regulate translation initiation and/or mRNA stability. Usually binds in the 5'-UTR at or near the Shine-Dalgarno sequence preventing ribosome-binding, thus repressing translation. Its main target seems to be the major flagellin gene, while its function is anatagonized by FliW. The sequence is that of Translational regulator CsrA from Shouchella clausii (strain KSM-K16) (Alkalihalobacillus clausii).